Here is a 397-residue protein sequence, read N- to C-terminus: 1-deoxy-D-xylulose 5-phosphate reductoisomerase (397 aa).

Residues Ser-10, Gly-11, Ser-12, Ile-13, Ala-36, Arg-37, and Asn-124 each coordinate NADPH. A 1-deoxy-D-xylulose 5-phosphate-binding site is contributed by Lys-125. Glu-126 serves as a coordination point for NADPH. Asp-150 provides a ligand contact to Mn(2+). 4 residues coordinate 1-deoxy-D-xylulose 5-phosphate: Ser-151, Glu-152, Ser-186, and His-209. Glu-152 is a binding site for Mn(2+). Gly-215 lines the NADPH pocket. Positions 222, 227, 228, and 231 each coordinate 1-deoxy-D-xylulose 5-phosphate. Glu-231 contributes to the Mn(2+) binding site.

The protein belongs to the DXR family. It depends on Mg(2+) as a cofactor. Mn(2+) is required as a cofactor.

It carries out the reaction 2-C-methyl-D-erythritol 4-phosphate + NADP(+) = 1-deoxy-D-xylulose 5-phosphate + NADPH + H(+). Its pathway is isoprenoid biosynthesis; isopentenyl diphosphate biosynthesis via DXP pathway; isopentenyl diphosphate from 1-deoxy-D-xylulose 5-phosphate: step 1/6. Catalyzes the NADPH-dependent rearrangement and reduction of 1-deoxy-D-xylulose-5-phosphate (DXP) to 2-C-methyl-D-erythritol 4-phosphate (MEP). This is 1-deoxy-D-xylulose 5-phosphate reductoisomerase from Aeromonas hydrophila subsp. hydrophila (strain ATCC 7966 / DSM 30187 / BCRC 13018 / CCUG 14551 / JCM 1027 / KCTC 2358 / NCIMB 9240 / NCTC 8049).